The chain runs to 338 residues: Solute carrier family 35 member G6 (338 aa).

A disordered region spans residues methionine 1–leucine 25. 9 consecutive transmembrane segments (helical) span residues leucine 40–methionine 60, leucine 67–leucine 87, tyrosine 105–valine 125, cysteine 160–leucine 180, alanine 190–tyrosine 210, threonine 221–leucine 241, cysteine 255–threonine 275, leucine 281–leucine 301, and isoleucine 310–cysteine 330. An EamA 1 domain is found at leucine 49–glycine 174. Residues tyrosine 272 to alanine 325 enclose the EamA 2 domain.

Belongs to the SLC35G solute transporter family. Expressed in placenta and testis.

It is found in the membrane. This is Solute carrier family 35 member G6 (SLC35G6) from Homo sapiens (Human).